Consider the following 390-residue polypeptide: 3-ketoacyl-CoA thiolase (390 aa).

C95 acts as the Acyl-thioester intermediate in catalysis. Catalysis depends on proton acceptor residues H346 and C376.

It belongs to the thiolase-like superfamily. Thiolase family. As to quaternary structure, heterotetramer of two alpha chains (FadB) and two beta chains (FadA).

It is found in the cytoplasm. It carries out the reaction an acyl-CoA + acetyl-CoA = a 3-oxoacyl-CoA + CoA. Its pathway is lipid metabolism; fatty acid beta-oxidation. Its function is as follows. Catalyzes the final step of fatty acid oxidation in which acetyl-CoA is released and the CoA ester of a fatty acid two carbons shorter is formed. This Acinetobacter baumannii (strain ATCC 17978 / DSM 105126 / CIP 53.77 / LMG 1025 / NCDC KC755 / 5377) protein is 3-ketoacyl-CoA thiolase.